Here is a 188-residue protein sequence, read N- to C-terminus: dCTP deaminase (188 aa).

DCTP is bound by residues 111-116 (KSTYAR), 135-137 (TLE), Q156, Y170, and Q180. E137 (proton donor/acceptor) is an active-site residue.

It belongs to the dCTP deaminase family. As to quaternary structure, homotrimer.

The catalysed reaction is dCTP + H2O + H(+) = dUTP + NH4(+). It functions in the pathway pyrimidine metabolism; dUMP biosynthesis; dUMP from dCTP (dUTP route): step 1/2. Its function is as follows. Catalyzes the deamination of dCTP to dUTP. The polypeptide is dCTP deaminase (Laribacter hongkongensis (strain HLHK9)).